The chain runs to 294 residues: uncharacterized protein (294 aa).

The tract at residues 1-215 is disordered; the sequence is MTTAITPDKK…DQDDDDQKDL (215 aa). Basic residues-rich tracts occupy residues 27-43 and 50-78; these read TKPR…KSKK and AKKR…KKAP. Residues 79–88 show a composition bias toward low complexity; sequence MKAPSKPAAK. The segment covering 92–102 has biased composition (polar residues); sequence QQAQASLQKPI. Pro residues predominate over residues 118-136; sequence PRPPTPIPPTGVKPEPAPR. Residues 145-160 show a composition bias toward low complexity; that stretch reads SVSSTTPRTSATTGTT.

This is an uncharacterized protein from Caenorhabditis elegans.